The chain runs to 228 residues: Putative adhesin RBE_1271 (228 aa).

The signal sequence occupies residues 1-22 (MKKLLLIAATSATVLSSALSFA).

The protein is Putative adhesin RBE_1271 of Rickettsia bellii (strain RML369-C).